A 114-amino-acid polypeptide reads, in one-letter code: T cell receptor beta variable 4-2 (114 aa).

The signal sequence occupies residues 1 to 21 (MGCRLLCCAVLCLLGAVPMET). Positions 22–114 (GVTQTPRHLV…SALYLCASSQ (93 aa)) constitute an Ig-like domain. Cys42 and Cys110 form a disulfide bridge. 2 N-linked (GlcNAc...) asparagine glycosylation sites follow: Asn76 and Asn89.

As to quaternary structure, alpha-beta TR is a heterodimer composed of an alpha and beta chain; disulfide-linked. The alpha-beta TR is associated with the transmembrane signaling CD3 coreceptor proteins to form the TR-CD3 (TcR or TCR). The assembly of alpha-beta TR heterodimers with CD3 occurs in the endoplasmic reticulum where a single alpha-beta TR heterodimer associates with one CD3D-CD3E heterodimer, one CD3G-CD3E heterodimer and one CD247 homodimer forming a stable octameric structure. CD3D-CD3E and CD3G-CD3E heterodimers preferentially associate with TR alpha and TR beta chains, respectively. The association of the CD247 homodimer is the last step of TcR assembly in the endoplasmic reticulum and is required for transport to the cell surface.

The protein localises to the cell membrane. Its function is as follows. V region of the variable domain of T cell receptor (TR) beta chain that participates in the antigen recognition. Alpha-beta T cell receptors are antigen specific receptors which are essential to the immune response and are present on the cell surface of T lymphocytes. Recognize peptide-major histocompatibility (MH) (pMH) complexes that are displayed by antigen presenting cells (APC), a prerequisite for efficient T cell adaptive immunity against pathogens. Binding of alpha-beta TR to pMH complex initiates TR-CD3 clustering on the cell surface and intracellular activation of LCK that phosphorylates the ITAM motifs of CD3G, CD3D, CD3E and CD247 enabling the recruitment of ZAP70. In turn ZAP70 phosphorylates LAT, which recruits numerous signaling molecules to form the LAT signalosome. The LAT signalosome propagates signal branching to three major signaling pathways, the calcium, the mitogen-activated protein kinase (MAPK) kinase and the nuclear factor NF-kappa-B (NF-kB) pathways, leading to the mobilization of transcription factors that are critical for gene expression and essential for T cell growth and differentiation. The T cell repertoire is generated in the thymus, by V-(D)-J rearrangement. This repertoire is then shaped by intrathymic selection events to generate a peripheral T cell pool of self-MH restricted, non-autoaggressive T cells. Post-thymic interaction of alpha-beta TR with the pMH complexes shapes TR structural and functional avidity. This chain is T cell receptor beta variable 4-2, found in Homo sapiens (Human).